The following is a 617-amino-acid chain: COMPASS component cclA (617 aa).

2 stretches are compositionally biased toward low complexity: residues 1–19 (MASI…INSP) and 40–50 (SSPAPASNASA). Positions 1–89 (MASIQPAGSS…AKKRATAVQN (89 aa)) are disordered. Residues 57–69 (SKRNKRDSRKKRE) are compositionally biased toward basic residues. Residues 157-380 (IADTSFPHIK…YAFNLKETPT (224 aa)) enclose the B30.2/SPRY domain. Residues 595–617 (TPNTEEPAARPENITVGHDVEMS) are disordered.

The protein belongs to the cclA family. As to quaternary structure, component of the COMPASS complex.

It is found in the nucleus. The protein resides in the chromosome. It localises to the telomere. In terms of biological role, component of the COMPASS (Set1C) complex that specifically mono-, di- and trimethylates histone H3 to form H3K4me1/2/3, which subsequently plays a role in telomere length maintenance and transcription elongation regulation. Controls the production of several secondary metabolites, including astellolides. This Aspergillus oryzae (strain ATCC 42149 / RIB 40) (Yellow koji mold) protein is COMPASS component cclA.